The chain runs to 515 residues: Sodium/hydrogen exchanger 9B1 (515 aa).

Residues 1–10 are compositionally biased toward basic and acidic residues; the sequence is MHTTESKNEH. Positions 1–32 are disordered; sequence MHTTESKNEHLEDENFQTSTTPQSLIDPNNTA. A compositionally biased stretch (polar residues) spans 16-32; the sequence is FQTSTTPQSLIDPNNTA. The next 13 helical transmembrane spans lie at 66 to 86, 95 to 115, 116 to 136, 152 to 172, 187 to 207, 215 to 235, 260 to 280, 284 to 304, 337 to 357, 368 to 388, 407 to 427, 431 to 451, and 472 to 492; these read VIITNGVILFVIWCMTWSILG, LFGLFIIFYSAIIGGKILQLI, RIPLVPPLPPLLGMLLAGFTI, WSSILRSIALTIILIRAGLGL, LAVGPCLMEASAAAVFSHFIM, FLLGFVLGAVSPAVVVPYMMV, ILAITGFNTCLSIVFSSGGIL, IASIRNVCISLLAGIVLGFFV, IGLHGSGGLCTLVLSFIAGTK, IITTVWDIFQPLLFGLVGAEV, LALCVRILTTYLLMCFAGFSF, IFIALAWMPKATVQAVLGPLA, and VAFLAILITAPNGALLMGILG.

This sequence belongs to the monovalent cation:proton antiporter 1 (CPA1) transporter (TC 2.A.36) family. In terms of tissue distribution, expressed only in the testis.

It localises to the cell projection. Its subcellular location is the cilium. The protein localises to the flagellum membrane. In terms of biological role, sperm-specific Na(+)/H(+) exchanger involved in intracellular pH regulation of spermatozoa. Involved in sperm motility and fertility. In Homo sapiens (Human), this protein is Sodium/hydrogen exchanger 9B1.